Consider the following 164-residue polypeptide: 3-isopropylmalate dehydratase small subunit 1 (164 aa).

This sequence belongs to the LeuD family. LeuD type 2 subfamily. In terms of assembly, heterodimer of LeuC and LeuD.

It carries out the reaction (2R,3S)-3-isopropylmalate = (2S)-2-isopropylmalate. It participates in amino-acid biosynthesis; L-leucine biosynthesis; L-leucine from 3-methyl-2-oxobutanoate: step 2/4. Functionally, catalyzes the isomerization between 2-isopropylmalate and 3-isopropylmalate, via the formation of 2-isopropylmaleate. The chain is 3-isopropylmalate dehydratase small subunit 1 (leuD1) from Pyrococcus abyssi (strain GE5 / Orsay).